A 279-amino-acid polypeptide reads, in one-letter code: Prohibitin-4, mitochondrial (279 aa).

Gly-2 carries the post-translational modification N-acetylglycine. Over 2 to 6 the chain is Mitochondrial matrix; sequence GSQQV. Residues 7–28 traverse the membrane as a helical; Signal-anchor for type II membrane protein segment; sequence AISFLTNLAKAAFGLGVAATAL. Over 29–279 the chain is Mitochondrial intermembrane; the sequence is NSSLYTVDGG…SMLFNLNPGR (251 aa).

This sequence belongs to the prohibitin family. As to quaternary structure, component of a prohibitin multimeric complex in mitochondrial membranes. As to expression, mostly expressed in proliferative tissues, including vasculature, shoot and root apical tissues. Accumulates in dry seeds.

The protein localises to the mitochondrion inner membrane. Functionally, prohibitin probably acts as a holdase/unfoldase for the stabilization of newly synthesized mitochondrial proteins. This is Prohibitin-4, mitochondrial (PHB4) from Arabidopsis thaliana (Mouse-ear cress).